Reading from the N-terminus, the 492-residue chain is Proline--tRNA ligase (492 aa).

The protein belongs to the class-II aminoacyl-tRNA synthetase family. ProS type 3 subfamily. In terms of assembly, homodimer.

It localises to the cytoplasm. The enzyme catalyses tRNA(Pro) + L-proline + ATP = L-prolyl-tRNA(Pro) + AMP + diphosphate. In terms of biological role, catalyzes the attachment of proline to tRNA(Pro) in a two-step reaction: proline is first activated by ATP to form Pro-AMP and then transferred to the acceptor end of tRNA(Pro). In Flavobacterium psychrophilum (strain ATCC 49511 / DSM 21280 / CIP 103535 / JIP02/86), this protein is Proline--tRNA ligase.